The primary structure comprises 229 residues: DNA mismatch repair protein MutH (229 aa).

This sequence belongs to the MutH family.

It localises to the cytoplasm. In terms of biological role, sequence-specific endonuclease that cleaves unmethylated GATC sequences. It is involved in DNA mismatch repair. This is DNA mismatch repair protein MutH from Escherichia coli O127:H6 (strain E2348/69 / EPEC).